A 133-amino-acid chain; its full sequence is p53 and DNA damage-regulated protein 1 (133 aa).

Belongs to the prefoldin subunit beta family. Component of the PAQosome complex which is responsible for the biogenesis of several protein complexes and which consists of R2TP complex members RUVBL1, RUVBL2, RPAP3 and PIH1D1, URI complex members PFDN2, PFDN6, PDRG1, UXT and URI1 as well as ASDURF, POLR2E and DNAAF10/WDR92.

It localises to the cytoplasm. Functionally, may play a role in chaperone-mediated protein folding. The polypeptide is p53 and DNA damage-regulated protein 1 (PDRG1) (Pongo abelii (Sumatran orangutan)).